Here is a 451-residue protein sequence, read N- to C-terminus: DNA polymerase IV (451 aa).

Residues 5-187 (VIHVDMDAFF…LPVGRLWGVG (183 aa)) enclose the UmuC domain. Mg(2+)-binding residues include aspartate 9 and aspartate 104. Residue glutamate 105 is part of the active site.

Belongs to the DNA polymerase type-Y family. In terms of assembly, monomer. The cofactor is Mg(2+).

It localises to the cytoplasm. It carries out the reaction DNA(n) + a 2'-deoxyribonucleoside 5'-triphosphate = DNA(n+1) + diphosphate. In terms of biological role, poorly processive, error-prone DNA polymerase involved in untargeted mutagenesis. Copies undamaged DNA at stalled replication forks, which arise in vivo from mismatched or misaligned primer ends. These misaligned primers can be extended by PolIV. Exhibits no 3'-5' exonuclease (proofreading) activity. May be involved in translesional synthesis, in conjunction with the beta clamp from PolIII. The chain is DNA polymerase IV from Corynebacterium diphtheriae (strain ATCC 700971 / NCTC 13129 / Biotype gravis).